Here is a 692-residue protein sequence, read N- to C-terminus: Elongation factor G (692 aa).

Positions aspartate 9–leucine 283 constitute a tr-type G domain. GTP-binding positions include alanine 18–threonine 25, aspartate 82–histidine 86, and asparagine 136–aspartate 139.

This sequence belongs to the TRAFAC class translation factor GTPase superfamily. Classic translation factor GTPase family. EF-G/EF-2 subfamily.

The protein localises to the cytoplasm. Functionally, catalyzes the GTP-dependent ribosomal translocation step during translation elongation. During this step, the ribosome changes from the pre-translocational (PRE) to the post-translocational (POST) state as the newly formed A-site-bound peptidyl-tRNA and P-site-bound deacylated tRNA move to the P and E sites, respectively. Catalyzes the coordinated movement of the two tRNA molecules, the mRNA and conformational changes in the ribosome. The chain is Elongation factor G (fusA) from Thermotoga maritima (strain ATCC 43589 / DSM 3109 / JCM 10099 / NBRC 100826 / MSB8).